A 124-amino-acid chain; its full sequence is Sulfiredoxin (124 aa).

It belongs to the sulfiredoxin family. Interacts with tpx1 in response to oxidative stress.

The protein localises to the cytoplasm. It localises to the nucleus. The enzyme catalyses S-hydroxy-S-oxy-L-cysteinyl-[peroxiredoxin] + [protein]-dithiol + ATP = S-hydroxy-L-cysteinyl-[peroxiredoxin] + [protein]-disulfide + ADP + phosphate. Functionally, contributes to oxidative stress resistance by reducing cysteine-sulfinic acid formed under exposure to oxidants in a peroxiredoxin. May catalyze the reduction in a multi-step process by acting both as a specific phosphotransferase and a thioltransferase. The sequence is that of Sulfiredoxin (srx1) from Schizosaccharomyces pombe (strain 972 / ATCC 24843) (Fission yeast).